The primary structure comprises 304 residues: Aspartate carbamoyltransferase catalytic subunit (304 aa).

Residues arginine 57 and threonine 58 each contribute to the carbamoyl phosphate site. An L-aspartate-binding site is contributed by lysine 86. Arginine 107, histidine 135, and glutamine 138 together coordinate carbamoyl phosphate. Arginine 168 and arginine 229 together coordinate L-aspartate. Carbamoyl phosphate contacts are provided by leucine 266 and proline 267.

This sequence belongs to the aspartate/ornithine carbamoyltransferase superfamily. ATCase family. As to quaternary structure, heterooligomer of catalytic and regulatory chains.

The catalysed reaction is carbamoyl phosphate + L-aspartate = N-carbamoyl-L-aspartate + phosphate + H(+). Its pathway is pyrimidine metabolism; UMP biosynthesis via de novo pathway; (S)-dihydroorotate from bicarbonate: step 2/3. In terms of biological role, catalyzes the condensation of carbamoyl phosphate and aspartate to form carbamoyl aspartate and inorganic phosphate, the committed step in the de novo pyrimidine nucleotide biosynthesis pathway. This Methanosphaera stadtmanae (strain ATCC 43021 / DSM 3091 / JCM 11832 / MCB-3) protein is Aspartate carbamoyltransferase catalytic subunit.